Consider the following 746-residue polypeptide: Protein psiN (746 aa).

The signal sequence occupies residues 1-23 (MGNINKKLFYFLIQLITILIVLS). The Extracellular segment spans residues 24 to 679 (DDSYNSLLPL…KCQSAAVKAA (656 aa)). Asn-97 and Asn-124 each carry an N-linked (GlcNAc...) asparagine glycan. The PA14 domain occupies 125–276 (VTSDDPRIYS…YDYCGVCEGM (152 aa)). Residues Asn-319, Asn-353, Asn-380, Asn-477, Asn-553, Asn-628, and Asn-654 are each glycosylated (N-linked (GlcNAc...) asparagine). The helical transmembrane segment at 680–700 (VGVGAGAAAGIAIGGAIALGL) threads the bilayer. At 701–746 (AAFGGKRGYDAWKSSRDNQIQTSSENPLYNPNPNQGDNPLYAANNS) the chain is on the cytoplasmic side. The segment at 714 to 746 (SSRDNQIQTSSENPLYNPNPNQGDNPLYAANNS) is disordered. Over residues 717–746 (DNQIQTSSENPLYNPNPNQGDNPLYAANNS) the composition is skewed to polar residues.

Belongs to the prespore-cell-inducing factor family.

The protein resides in the membrane. This Dictyostelium discoideum (Social amoeba) protein is Protein psiN (psiN).